A 191-amino-acid chain; its full sequence is Elongation factor P (191 aa).

This sequence belongs to the elongation factor P family.

It is found in the cytoplasm. The protein operates within protein biosynthesis; polypeptide chain elongation. Involved in peptide bond synthesis. Stimulates efficient translation and peptide-bond synthesis on native or reconstituted 70S ribosomes in vitro. Probably functions indirectly by altering the affinity of the ribosome for aminoacyl-tRNA, thus increasing their reactivity as acceptors for peptidyl transferase. In Janthinobacterium sp. (strain Marseille) (Minibacterium massiliensis), this protein is Elongation factor P.